The following is a 190-amino-acid chain: UPF0149 protein NT01EI_3357 (190 aa).

This sequence belongs to the UPF0149 family.

This is UPF0149 protein NT01EI_3357 from Edwardsiella ictaluri (strain 93-146).